Consider the following 297-residue polypeptide: Probable porphobilinogen deaminase (297 aa).

An S-(dipyrrolylmethanemethyl)cysteine modification is found at Cys241.

The protein belongs to the HMBS family. It depends on dipyrromethane as a cofactor.

It catalyses the reaction 4 porphobilinogen + H2O = hydroxymethylbilane + 4 NH4(+). The protein operates within porphyrin-containing compound metabolism; protoporphyrin-IX biosynthesis; coproporphyrinogen-III from 5-aminolevulinate: step 2/4. Functionally, tetrapolymerization of the monopyrrole PBG into the hydroxymethylbilane pre-uroporphyrinogen in several discrete steps. The polypeptide is Probable porphobilinogen deaminase (Pyrobaculum arsenaticum (strain DSM 13514 / JCM 11321 / PZ6)).